The following is a 585-amino-acid chain: Amyloid protein-binding protein 2 (585 aa).

TPR repeat units follow at residues 50–83, 120–153, 206–239, 288–321, 333–367, 429–462, 471–505, and 514–547; these read QGRL…HHCF, IQVG…CTLH, AALY…ITAG, SDTL…RQSV, HEDL…ITHI, AKHY…KEQL, ALSV…GKKL, and EYDY…NRLR.

In terms of assembly, component of a CRL2 E3 ubiquitin-protein ligase complex, also named ECS (Elongin BC-CUL2/5-SOCS-box protein) complex, composed of CUL2, Elongin BC (ELOB and ELOC), RBX1 and substrate-specific adapter APPBP2. Interacts with APP; APP interaction inhibits the E3 ubiquitin-protein ligase activity of the CRL2(APPBP2) complex. Post-translationally, rapidly degraded by the proteasome upon overexpression of a C-terminal fragment of APP.

The protein resides in the nucleus. It is found in the cytoplasm. It localises to the cytoskeleton. The protein localises to the membrane. It participates in protein modification; protein ubiquitination. Its activity is regulated as follows. E3 ubiquitin-protein ligase activity of the CRL2(APPBP2) complex is inhibited by APP. Its function is as follows. Substrate-recognition component of a Cul2-RING (CRL2) E3 ubiquitin-protein ligase complex of the DesCEND (destruction via C-end degrons) pathway, which recognizes a C-degron located at the extreme C terminus of target proteins, leading to their ubiquitination and degradation. The C-degron recognized by the DesCEND pathway is usually a motif of less than ten residues and can be present in full-length proteins, truncated proteins or proteolytically cleaved forms. The CRL2(APPBP2) complex specifically recognizes proteins with a -Arg-Xaa-Xaa-Gly degron at the C-terminus, leading to their ubiquitination and degradation. The CRL2(APPBP2) complex mediates ubiquitination and degradation of truncated SELENOV selenoproteins produced by failed UGA/Sec decoding, which end with a -Arg-Xaa-Xaa-Gly degron. May play a role in intracellular protein transport: may be involved in the translocation of APP along microtubules toward the cell surface. In Mus musculus (Mouse), this protein is Amyloid protein-binding protein 2.